We begin with the raw amino-acid sequence, 188 residues long: Guanylate kinase (188 aa).

In terms of domain architecture, Guanylate kinase-like spans G8–R188. G15–S22 lines the ATP pocket.

Belongs to the guanylate kinase family.

It is found in the cytoplasm. The catalysed reaction is GMP + ATP = GDP + ADP. Its function is as follows. Essential for recycling GMP and indirectly, cGMP. In Corynebacterium jeikeium (strain K411), this protein is Guanylate kinase.